A 323-amino-acid chain; its full sequence is Elongation factor P--(R)-beta-lysine ligase (323 aa).

76–78 (SPE) lines the substrate pocket. ATP is bound by residues 100-102 (RNE) and Asn-109. Tyr-118 is a substrate binding site. 242–243 (EL) is an ATP binding site. Residue Glu-249 participates in substrate binding. Residue Gly-298 participates in ATP binding.

This sequence belongs to the class-II aminoacyl-tRNA synthetase family. EpmA subfamily. In terms of assembly, homodimer.

The enzyme catalyses D-beta-lysine + L-lysyl-[protein] + ATP = N(6)-((3R)-3,6-diaminohexanoyl)-L-lysyl-[protein] + AMP + diphosphate + H(+). Its function is as follows. With EpmB is involved in the beta-lysylation step of the post-translational modification of translation elongation factor P (EF-P). Catalyzes the ATP-dependent activation of (R)-beta-lysine produced by EpmB, forming a lysyl-adenylate, from which the beta-lysyl moiety is then transferred to the epsilon-amino group of a conserved specific lysine residue in EF-P. In Haemophilus influenzae (strain PittGG), this protein is Elongation factor P--(R)-beta-lysine ligase.